We begin with the raw amino-acid sequence, 459 residues long: Xylose/arabinose-binding protein XacG (459 aa).

The helical transmembrane segment at Ala19–Gly36 threads the bilayer. Residues Gly27–Trp68 are disordered.

Belongs to the bacterial solute-binding protein 1 family. As to quaternary structure, the complex is composed of two ATP-binding proteins (XacJ and XacK), two transmembrane proteins (XacH and XacI) and a solute-binding protein (XacG).

The protein localises to the cell membrane. Part of the ABC transporter complex XacGHIJK involved in the uptake of xylose and arabinose. In Haloferax volcanii (strain ATCC 29605 / DSM 3757 / JCM 8879 / NBRC 14742 / NCIMB 2012 / VKM B-1768 / DS2) (Halobacterium volcanii), this protein is Xylose/arabinose-binding protein XacG.